The sequence spans 619 residues: Chaperone protein HscA homolog (619 aa).

It belongs to the heat shock protein 70 family.

Chaperone involved in the maturation of iron-sulfur cluster-containing proteins. Has a low intrinsic ATPase activity which is markedly stimulated by HscB. This chain is Chaperone protein HscA homolog, found in Haemophilus influenzae (strain PittGG).